Reading from the N-terminus, the 1045-residue chain is Protein phosphatase Slingshot (1045 aa).

Over residues methionine 1 to aspartate 20 the composition is skewed to polar residues. Disordered regions lie at residues methionine 1 to arginine 35, threonine 58 to serine 80, lysine 143 to asparagine 194, and glutamate 306 to glutamate 325. Low complexity predominate over residues threonine 66–serine 80. The span at glycine 149 to serine 174 shows a compositional bias: polar residues. A compositionally biased stretch (basic and acidic residues) spans serine 175–asparagine 185. One can recognise a DEK-C domain in the interval glutamate 324–glycine 379. One can recognise a Tyrosine-protein phosphatase domain in the interval alanine 383–alanine 524. Cysteine 468 serves as the catalytic Phosphocysteine intermediate. Positions glutamate 529–arginine 547 are enriched in basic and acidic residues. Disordered stretches follow at residues glutamate 529 to serine 631, serine 699 to arginine 799, and alanine 1001 to serine 1045. Polar residues predominate over residues alanine 560–threonine 569. Residues methionine 586–arginine 601 show a composition bias toward basic residues. The segment covering arginine 602–asparagine 625 has biased composition (polar residues). Residues serine 704–isoleucine 713 show a composition bias toward low complexity. At serine 719 the chain carries Phosphoserine. The segment covering cysteine 721–valine 732 has biased composition (low complexity). Composition is skewed to polar residues over residues threonine 764–alanine 774 and lysine 1008–valine 1021. Residues serine 1029–serine 1045 show a composition bias toward low complexity.

Belongs to the protein-tyrosine phosphatase family. Interacts with actin.

Its subcellular location is the cytoplasm. The protein resides in the cytoskeleton. It carries out the reaction O-phospho-L-tyrosyl-[protein] + H2O = L-tyrosyl-[protein] + phosphate. The enzyme catalyses O-phospho-L-seryl-[protein] + H2O = L-seryl-[protein] + phosphate. The catalysed reaction is O-phospho-L-threonyl-[protein] + H2O = L-threonyl-[protein] + phosphate. Protein phosphatase which regulates actin filament dynamics. Dephosphorylates and activates the actin binding/depolymerizing factor tsr/cofilin, which subsequently binds to actin filaments and stimulates their disassembly. Required for axon growth. This chain is Protein phosphatase Slingshot (ssh), found in Drosophila melanogaster (Fruit fly).